We begin with the raw amino-acid sequence, 335 residues long: Leukocyte cell-derived chemotaxin-2 homolog (335 aa).

The N-terminal stretch at 1–20 is a signal peptide; it reads MHLRTLHFLILIGIFIGGQT. Intrachain disulfides connect C28-C66 and C39-C46. D63 is a Zn(2+) binding site. N317 carries an N-linked (GlcNAc...) asparagine glycan.

It belongs to the LECT2/MIM-1 family. In terms of assembly, component of a multi-protein dma-1 receptor-ligand complex, which is activated upon binding of lect-2, mnr-1 and sax-7 ligands to promote the morphogenesis of dendrites which extend from the PVD neuronal body. Within the complex interacts with sax-7; the interaction is required for lect-2 dendritic localization and enhances the binding of the mnr-1 and sax-7 ligands to the dma-1 receptor-ligand complex. In terms of tissue distribution, expressed in body wall muscle cells, along the boundary of the lateral hypodermis, seam cells, processes of the nervous system including commissures, sensory dendrites in the head, and lateral nerve tracts, and motor neurons and some mechanosensory neurons such as ALM.

Its subcellular location is the secreted. It localises to the cell junction. The protein resides in the extracellular space. It is found in the extracellular matrix. The protein localises to the basement membrane. Its subcellular location is the cell projection. It localises to the dendrite. The protein resides in the perikaryon. It is found in the cell surface. Muscle-derived dendritic guidance cue, which is required for the formation of somatosensory dendritic arbors which extend from PVD and FLP sensory neurons during development. Ligand of a multi-protein dma-1 receptor-ligand complex, which is activated upon binding of lect-2, mnr-1 and sax-7 ligands to control the growth of dendrites that extend anteriorly from the PVD neuronal cell body. Enhances the binding of the mnr-1 and sax-7 ligands to the dma-1 receptor-ligand complex. Restricts the growth of secondary PVD dendritic branches and any irregularly positioned ectopic tertiary dendritic branches that originate from secondary branches, and promotes the formation of stable higher order dendritic branches. In particular, it is required for the formation of quaternary PVD dendritic branches and promotes their innervation of body wall muscles. Promotes self-avoidance of tertiary dendritic branches of PVD sensory neurons. Not required for the growth of dendrites that extend from AIY and PVQ interneurons, DVB GABergic neurons, PLM and ALM mechanosensory neurons, AFD sensory neurons and DD/VD and DA/DB motor neurons. The chain is Leukocyte cell-derived chemotaxin-2 homolog from Caenorhabditis elegans.